A 237-amino-acid chain; its full sequence is Oligoribonuclease, mitochondrial (237 aa).

A mitochondrion-targeting transit peptide spans M1–G25. The region spanning M43–L207 is the Exonuclease domain. 2 residues coordinate Mg(2+): D47 and E49. A Phosphoserine modification is found at S92. The residue at position 122 (Y122) is a Phosphotyrosine. D147 is a binding site for Mg(2+). N6-acetyllysine is present on K173. The active site involves H194. Residue D199 participates in Mg(2+) binding.

Belongs to the oligoribonuclease family. Homodimer. Homotetramer. Mn(2+) is required as a cofactor. The cofactor is Mg(2+).

The protein localises to the mitochondrion intermembrane space. The protein resides in the mitochondrion matrix. It is found in the mitochondrion. It localises to the cytoplasm. Its subcellular location is the nucleus. Its function is as follows. 3'-to-5'exoribonuclease that preferentially degrades DNA and RNA oligonucleotides composed of only two nucleotides. Binds and degrades longer oligonucleotides with a lower affinity. Plays dual roles in mitochondria, scavenging nanoRNAs (small RNA oligonucleotides of &lt;5 nucleotides) that are produced by the degradosome and clearing short RNAs that are generated by RNA processing. Essential for correct initiation of mitochondrial transcription, degrading mitochondrial RNA dinucleotides to prevent RNA-primed transcription at non-canonical sites in the mitochondrial genome. Essential for embryonic development. This chain is Oligoribonuclease, mitochondrial (REXO2), found in Bos taurus (Bovine).